A 633-amino-acid polypeptide reads, in one-letter code: DNA topoisomerase 4 subunit B (633 aa).

ATP is bound by residues Tyr5, Asn45, Asp72, 113–119 (GLHGVGA), and Lys337. The region spanning 419 to 534 (KELFIVEGDS…LGHVYLALPP (116 aa)) is the Toprim domain. Mg(2+) contacts are provided by Glu425, Asp499, and Asp501.

It belongs to the type II topoisomerase family. ParE type 2 subfamily. Heterotetramer composed of ParC and ParE. Mg(2+) serves as cofactor. Mn(2+) is required as a cofactor. The cofactor is Ca(2+).

The enzyme catalyses ATP-dependent breakage, passage and rejoining of double-stranded DNA.. Its function is as follows. Topoisomerase IV is essential for chromosome segregation. It relaxes supercoiled DNA. Performs the decatenation events required during the replication of a circular DNA molecule. In Mycoplasma genitalium (strain ATCC 33530 / DSM 19775 / NCTC 10195 / G37) (Mycoplasmoides genitalium), this protein is DNA topoisomerase 4 subunit B.